We begin with the raw amino-acid sequence, 122 residues long: UPF0102 protein Atu0303 (122 aa).

Belongs to the UPF0102 family.

This Agrobacterium fabrum (strain C58 / ATCC 33970) (Agrobacterium tumefaciens (strain C58)) protein is UPF0102 protein Atu0303.